A 179-amino-acid polypeptide reads, in one-letter code: Pyridoxal 5'-phosphate synthase subunit PdxT (179 aa).

G48–S50 lines the L-glutamine pocket. C79 serves as the catalytic Nucleophile. Residues R101 and I127 to R128 contribute to the L-glutamine site. Catalysis depends on charge relay system residues H163 and E165.

It belongs to the glutaminase PdxT/SNO family. In terms of assembly, in the presence of PdxS, forms a dodecamer of heterodimers. Only shows activity in the heterodimer.

The catalysed reaction is aldehydo-D-ribose 5-phosphate + D-glyceraldehyde 3-phosphate + L-glutamine = pyridoxal 5'-phosphate + L-glutamate + phosphate + 3 H2O + H(+). It carries out the reaction L-glutamine + H2O = L-glutamate + NH4(+). The protein operates within cofactor biosynthesis; pyridoxal 5'-phosphate biosynthesis. Catalyzes the hydrolysis of glutamine to glutamate and ammonia as part of the biosynthesis of pyridoxal 5'-phosphate. The resulting ammonia molecule is channeled to the active site of PdxS. This chain is Pyridoxal 5'-phosphate synthase subunit PdxT, found in Francisella tularensis subsp. holarctica (strain FTNF002-00 / FTA).